Consider the following 60-residue polypeptide: Large ribosomal subunit protein bL32 (60 aa).

The segment at Met1 to Pro44 is disordered. A compositionally biased stretch (basic and acidic residues) spans Ser11–Leu22.

This sequence belongs to the bacterial ribosomal protein bL32 family.

This chain is Large ribosomal subunit protein bL32, found in Pseudomonas putida (strain W619).